Reading from the N-terminus, the 276-residue chain is Secretagogin (276 aa).

EF-hand domains are found at residues 12–47 (LDAA…MLMK), 58–93 (NLHK…EDEN), 105–140 (DSSV…LFLH), 149–184 (KLEE…QENF), 197–232 (ERKR…MMEL), and 240–276 (VDLD…KINP). 27 residues coordinate Ca(2+): Asp25, Asp27, Tyr31, Glu36, Asp71, Ser73, Asp75, Arg77, Glu82, Asp118, Asp120, Ser122, Glu129, Asp162, Asn164, Asp166, Arg168, Asp173, Asp210, Ser212, Thr214, Glu221, Asp254, Asn256, Asp258, Lys260, and Glu265.

In terms of tissue distribution, expressed at high levels in the pancreatic islets of Langerhans and to a much lesser extent in the gastrointestinal tract (stomach, small intestine and colon), the adrenal medulla and cortex and the thyroid C-cells. In the brain, the expression is restricted to distinct subtypes of neurons with highest expression in the molecular layer of the cerebellum (stellate and basket cells), in the anterior part of the pituitary gland, in the thalamus, in the hypothalamus and in a subgroup of neocortical neurons.

The protein localises to the cytoplasm. Its subcellular location is the secreted. It localises to the cytoplasmic vesicle. It is found in the secretory vesicle membrane. The chain is Secretagogin (SCGN) from Homo sapiens (Human).